We begin with the raw amino-acid sequence, 219 residues long: Large ribosomal subunit protein uL3 (219 aa).

Residues 136 to 156 form a disordered region; the sequence is GASHGAHRNHRKPGSIGGCAT.

Belongs to the universal ribosomal protein uL3 family. Part of the 50S ribosomal subunit. Forms a cluster with proteins L14 and L19.

One of the primary rRNA binding proteins, it binds directly near the 3'-end of the 23S rRNA, where it nucleates assembly of the 50S subunit. This Kineococcus radiotolerans (strain ATCC BAA-149 / DSM 14245 / SRS30216) protein is Large ribosomal subunit protein uL3.